Reading from the N-terminus, the 1354-residue chain is Tensin homolog (1354 aa).

The region spanning 38-207 (MKDRKEGVQV…GYFSSLLSGR (170 aa)) is the Phosphatase tensin-type domain. Residue cysteine 144 is the Phosphocysteine intermediate of the active site. One can recognise a C2 tensin-type domain in the interval 212-337 (SDPLYLHNII…VTVELVVSHT (126 aa)). 7 disordered regions span residues 380–442 (EYSE…DVVP), 597–616 (STLQ…RTLN), 638–660 (SNTA…SVQL), 692–720 (DVRG…NNTP), 734–754 (SVTT…EADA), 794–879 (AANN…DRQR), and 1015–1035 (NGER…HNGY). Over residues 391–401 (SSKSANPINNN) the composition is skewed to polar residues. The segment covering 408 to 417 (VGPPVPPKPS) has biased composition (pro residues). 3 stretches are compositionally biased toward polar residues: residues 704–720 (HNAS…NNTP), 734–747 (SVTT…STPS), and 794–804 (AANNDENQHNL). Positions 821–843 (AEFRREEERLRNTRSPYGEERWR) are enriched in basic and acidic residues. Residues 1017-1033 (ERGGSGHAAGGGGGGHN) are compositionally biased toward gly residues. The SH2 domain occupies 1083 to 1187 (WYKPTISREQ…ALPTKLVLPD (105 aa)). The 145-residue stretch at 1209–1353 (ACNVVYVGSV…NKVMLAQKNR (145 aa)) folds into the PTB domain.

The protein belongs to the PTEN phosphatase protein family. May interact (via SH2 domain) with receptor svh-2 (when tyrosine-phosphorylated). May interact (via C-terminus) with integrin pat-3. As to expression, expressed in ventral motor neurons, including ventral and dorsal D-type neurons, and in a subset of cells in the head.

The protein localises to the cell projection. The protein resides in the axon. It carries out the reaction O-phospho-L-tyrosyl-[protein] + H2O = L-tyrosyl-[protein] + phosphate. Probable phosphatase which regulates axon regeneration after injury by linking the svh-2 and integrin signaling pathways. Its function is as follows. Not involved in axon regeneration after injury. This Caenorhabditis elegans protein is Tensin homolog.